Here is a 211-residue protein sequence, read N- to C-terminus: Allatostatins MIP (211 aa).

A signal peptide spans 1-24 (MAHTKTRRTYGFLMVLLILGSACG). Residues 25 to 63 (NLVASGSAGSPPSNEPGGGGLSEQVVLDQLSESDLYGNN) constitute a propeptide that is removed on maturation. Trp74 is modified (tryptophan amide). Positions 78–148 (SSSGDVSDPD…DDLAGEPDVE (71 aa)) are excised as a propeptide. Over residues 115-135 (ASGQSAQQQQQQPLQQQSQSG) the composition is skewed to low complexity. Positions 115 to 142 (ASGQSAQQQQQQPLQQQSQSGEDFDDLA) are disordered. Tryptophan amide occurs at positions 159, 175, 189, and 202. The tract at residues 168–190 (WNKFRGAWGKREPTWNNLKGMWG) is disordered. Positions 206–211 (SQLPSN) are excised as a propeptide.

In larvae, strongly expressed in the midgut region before and in between the copper cells, and in a group of cells in the posterior part of the larval midgut. Expressed in the neurons of many areas including the subesophageal ganglion/tritocerebrum (SOG), olfactory glomeruli, lateral ventral protocerebrum, mushroom body, the optic lobe medulla and in the antennal lobes.

It localises to the secreted. Functionally, ligand for the sex peptide receptor (SPR). Stabilizes sleep and maintains sleep homeostasis to inhibit the activity of wake-promoting circuits, such as those that involve the pigment dispersing factor (pdf) neurons. Regulated by the circadian clock network and pathways associated with a sleep homeostat. May also have a regulatory role in gut motility. This is Allatostatins MIP (Mip) from Drosophila melanogaster (Fruit fly).